A 327-amino-acid chain; its full sequence is Short chain isoprenyl diphosphate synthase (327 aa).

Isopentenyl diphosphate contacts are provided by Lys48, Arg51, and His80. Residues Asp87 and Asp91 each contribute to the Mg(2+) site. Arg96 serves as a coordination point for an all-trans-polyprenyl diphosphate. Residue Arg97 participates in isopentenyl diphosphate binding. The an all-trans-polyprenyl diphosphate site is built by Lys176, Thr177, Gln214, Lys231, and Lys241.

This sequence belongs to the FPP/GGPP synthase family. In terms of assembly, homodimer. Mg(2+) serves as cofactor.

It localises to the cytoplasm. The protein is Short chain isoprenyl diphosphate synthase (idsA) of Methanocaldococcus jannaschii (strain ATCC 43067 / DSM 2661 / JAL-1 / JCM 10045 / NBRC 100440) (Methanococcus jannaschii).